The chain runs to 295 residues: Nucleotide-binding protein CMS1991 (295 aa).

Residue 19–26 participates in ATP binding; that stretch reads GMSGAGRS. 70 to 73 contributes to the GTP binding site; the sequence is DVRG.

Belongs to the RapZ-like family.

Displays ATPase and GTPase activities. This is Nucleotide-binding protein CMS1991 from Clavibacter sepedonicus (Clavibacter michiganensis subsp. sepedonicus).